The following is a 437-amino-acid chain: Na(+)/H(+) antiporter NhaA (437 aa).

The next 11 helical transmembrane spans lie at 29 to 49 (TAGI…NTAW), 74 to 94 (LKHW…ALEL), 111 to 131 (LPVA…LLLV), 139 to 159 (GWGT…ALLG), 168 to 188 (LFLL…VAVG), 196 to 216 (VALG…LLGI), 229 to 249 (IWLA…ILGL), 307 to 327 (IALH…SNAG), 341 to 361 (IAIV…FSFL), 376 to 396 (WSLL…ALFI), and 411 to 431 (LGVL…LTLL).

This sequence belongs to the NhaA Na(+)/H(+) (TC 2.A.33) antiporter family.

It localises to the cell inner membrane. The enzyme catalyses Na(+)(in) + 2 H(+)(out) = Na(+)(out) + 2 H(+)(in). Functionally, na(+)/H(+) antiporter that extrudes sodium in exchange for external protons. This chain is Na(+)/H(+) antiporter NhaA, found in Rhizobium meliloti (strain 1021) (Ensifer meliloti).